A 488-amino-acid polypeptide reads, in one-letter code: Ribulose bisphosphate carboxylase large chain 2 (488 aa).

Residues N128 and T178 each coordinate substrate. K180 (proton acceptor) is an active-site residue. Position 182 (K182) interacts with substrate. Mg(2+) contacts are provided by K206, D208, and E209. K206 bears the N6-carboxylysine mark. The active-site Proton acceptor is the H298. Substrate-binding residues include R299, H331, and S383.

The protein belongs to the RuBisCO large chain family. Type I subfamily. In terms of assembly, heterohexadecamer of 8 large chains and 8 small chains. Mg(2+) serves as cofactor.

It catalyses the reaction 2 (2R)-3-phosphoglycerate + 2 H(+) = D-ribulose 1,5-bisphosphate + CO2 + H2O. The catalysed reaction is D-ribulose 1,5-bisphosphate + O2 = 2-phosphoglycolate + (2R)-3-phosphoglycerate + 2 H(+). In terms of biological role, ruBisCO catalyzes two reactions: the carboxylation of D-ribulose 1,5-bisphosphate, the primary event in carbon dioxide fixation, as well as the oxidative fragmentation of the pentose substrate. Both reactions occur simultaneously and in competition at the same active site. The polypeptide is Ribulose bisphosphate carboxylase large chain 2 (Nitrobacter hamburgensis (strain DSM 10229 / NCIMB 13809 / X14)).